We begin with the raw amino-acid sequence, 100 residues long: Apolipoprotein C-II (100 aa).

Residues 1-22 form the signal peptide; that stretch reads MDSRFLLALFLVLLVLGCEVQA. The tract at residues 66–74 is lipid binding; that stretch reads SVDEKLRDM. Residues 78 to 100 are lipoprotein lipase cofactor; sequence SSAAMTTYAIIFTDQILTLLKGE.

The protein belongs to the apolipoprotein C2 family. Post-translationally, proapolipoprotein C-II is synthesized as a sialic acid containing glycoprotein which is subsequently desialylated prior to its proteolytic processing. In terms of processing, proapolipoprotein C-II, the major form found in plasma undergoes proteolytic cleavage of its N-terminal hexapeptide to generate the mature form apolipoprotein C-II, which occurs as the minor form in plasma.

The protein resides in the secreted. Functionally, component of chylomicrons, very low-density lipoproteins (VLDL), low-density lipoproteins (LDL), and high-density lipoproteins (HDL) in plasma. Plays an important role in lipoprotein metabolism as an activator of lipoprotein lipase. This chain is Apolipoprotein C-II (APOC2), found in Myodes glareolus (Bank vole).